We begin with the raw amino-acid sequence, 1481 residues long: Cystic fibrosis transmembrane conductance regulator (1481 aa).

Residues 1-77 (MQRSPLEKAS…KLINALRRCF (77 aa)) are Cytoplasmic-facing. The helical transmembrane segment at 78–98 (FWRFMFYGILLYLGEVTKAVQ) threads the bilayer. In terms of domain architecture, ABC transmembrane type-1 1 spans 81–365 (FMFYGILLYL…WAVQTWYDSL (285 aa)). The Extracellular segment spans residues 99-122 (PLLLGRIIASYDPDNKEERSIAIY). A helical membrane pass occupies residues 123-146 (LGIGLCLLFIVRTLLLHPAIFGLH). Residues 147 to 195 (HIGMQMRIAMFSLIYKKTLKLSSRVLDKISIGQLVSLLSNNLNKFDEGL) are Cytoplasmic-facing. Residues 196-216 (ALAHFVWIVPLQVALLMGLIW) form a helical membrane-spanning segment. At 217–222 (ELLQAS) the chain is on the extracellular side. Residues 223–243 (AFCGLGFLIVLALFQAGLGRM) form a helical membrane-spanning segment. At 244 to 298 (MMKYRDQRAGKINERLVITSEMIENIQSVKAYCWEEAMEKMIENLRQTELKLTRK) the chain is on the cytoplasmic side. A helical transmembrane segment spans residues 299 to 319 (AAYVRYFNSSAFFFSGFFVVF). The Extracellular segment spans residues 320–339 (LSVLPYALIKGIVLRKIFTT). A helical transmembrane segment spans residues 340-358 (ISFCIVLRMAVTRQFPWAV). Residues 359 to 858 (QTWYDSLGAI…YLRYITVHKS (500 aa)) are Cytoplasmic-facing. Residues tryptophan 401, serine 434, 458–465 (GSTGAGKT), and glutamine 493 each bind ATP. Residues 423 to 646 (NDDDSLFFSN…RPDFSSKLMG (224 aa)) enclose the ABC transporter 1 domain. Cysteine 524 is lipidated: S-palmitoyl cysteine. A phosphoserine mark is found at serine 549 and serine 660. Residues 654-831 (SAERRNSILT…EEINEEDLKE (178 aa)) form a disordered R region region. Serine 670 is modified (phosphoserine; by PKA). A Phosphoserine modification is found at serine 686. Lysine 688 participates in a covalent cross-link: Glycyl lysine isopeptide (Lys-Gly) (interchain with G-Cter in ubiquitin). Serine 700 and serine 712 each carry phosphoserine. At threonine 717 the chain carries Phosphothreonine. Serine 737, serine 753, serine 768, serine 790, serine 795, and serine 813 each carry phosphoserine. The helical transmembrane segment at 859-879 (LIFVLIWCLVIFLAEVAASLV) threads the bilayer. Residues 859–1155 (LIFVLIWCLV…AVNSSIDVDS (297 aa)) form the ABC transmembrane type-1 2 domain. Residues 880–918 (VLWFLGNTPPQDKGNSTYSRNNSYAVIITRTSSYYVFYI) lie on the Extracellular side of the membrane. N-linked (GlcNAc...) asparagine glycans are attached at residues asparagine 894 and asparagine 900. The chain crosses the membrane as a discontinuously helical span at residues 919 to 939 (YVGVADTLLAMGFFRGLPLVH). Residues 940-990 (TLITVSKILHHKMLHSVLQAPMSTLNTLKAGGILNRFSKDIAILDDLLPLT) lie on the Cytoplasmic side of the membrane. Residues 991–1011 (IFDFIQLLLIVIGAIAVVAVL) form a helical membrane-spanning segment. Residues 1012–1013 (QP) are Extracellular-facing. The chain crosses the membrane as a helical span at residues 1014 to 1034 (YIFVATVPVIVAFIMLRAYFL). Over 1035-1095 (QTSQQLKQLE…TANWFLYLST (61 aa)) the chain is Cytoplasmic. The chain crosses the membrane as a helical span at residues 1096–1116 (LRWFQMRIEMIFVIFFIAVTF). Topologically, residues 1117 to 1130 (ISILTTGEGEGTVG) are extracellular. The chain crosses the membrane as a helical span at residues 1131–1151 (IILTLAMNIMSTLQWAVNSSI). Over 1152-1481 (DVDSLMRSVS…TEEEVQDTRL (330 aa)) the chain is Cytoplasmic. The 234-residue stretch at 1211–1444 (MTVKDLTAKY…RSLFRQAISP (234 aa)) folds into the ABC transporter 2 domain. ATP-binding positions include tyrosine 1220 and 1245–1252 (GRTGSGKS). Residues 1387–1481 (RTLKQAFADC…TEEEVQDTRL (95 aa)) are interaction with GORASP2. A lipid anchor (S-palmitoyl cysteine) is attached at cysteine 1396. A phosphoserine mark is found at serine 1445 and serine 1457. The disordered stretch occupies residues 1462–1481 (QPQIAALKEETEEEVQDTRL). Acidic residues predominate over residues 1471–1481 (ETEEEVQDTRL). The PDZ-binding motif lies at 1479–1481 (TRL).

It belongs to the ABC transporter superfamily. ABCC family. CFTR transporter (TC 3.A.1.202) subfamily. Monomer; does not require oligomerization for channel activity. May form oligomers in the membrane. Interacts with SLC26A3, SLC26A6 and NHERF1. Interacts with SHANK2. Interacts with MYO6. Interacts (via C-terminus) with GOPC (via PDZ domain); this promotes CFTR internalization and thereby decreases channel activity. Interacts with SLC4A7 through NHERF1. Found in a complex with MYO5B and RAB11A. Interacts with ANO1. Interacts with SLC26A8. Interacts with AHCYL1; the interaction increases CFTR activity. Interacts with CSE1L. The core-glycosylated form interacts with GORASP2 (via PDZ GRASP-type 1 domain) in respone to ER stress. Interacts with MARCHF2; the interaction leads to CFTR ubiqtuitination and degradation. Interacts with ADGRG2. Post-translationally, N-glycosylated. Phosphorylated; cAMP treatment promotes phosphorylation and activates the channel. Dephosphorylation decreases the ATPase activity (in vitro). Phosphorylation at PKA sites activates the channel. Phosphorylation at PKC sites enhances the response to phosphorylation by PKA. Phosphorylated by AMPK; this inhibits channel activity. In terms of processing, ubiquitinated, leading to its degradation in the lysosome. Deubiquitination by USP10 in early endosomes enhances its endocytic recycling to the cell membrane. Ubiquitinated by RNF185 during ER stress. Ubiquitinated by MARCHF2.

Its subcellular location is the apical cell membrane. It is found in the early endosome membrane. The protein resides in the cell membrane. The protein localises to the recycling endosome membrane. It localises to the endoplasmic reticulum membrane. Its subcellular location is the nucleus. The enzyme catalyses ATP + H2O + closed Cl(-) channel = ADP + phosphate + open Cl(-) channel.. It carries out the reaction chloride(in) = chloride(out). The catalysed reaction is hydrogencarbonate(in) = hydrogencarbonate(out). It catalyses the reaction ATP + H2O = ADP + phosphate + H(+). Its function is as follows. Epithelial ion channel that plays an important role in the regulation of epithelial ion and water transport and fluid homeostasis. Mediates the transport of chloride ions across the cell membrane. Possesses an intrinsic ATPase activity and utilizes ATP to gate its channel; the passive flow of anions through the channel is gated by cycles of ATP binding and hydrolysis by the ATP-binding domains. The ion channel is also permeable to HCO(3)(-); selectivity depends on the extracellular chloride concentration. Exerts its function also by modulating the activity of other ion channels and transporters. Contributes to the regulation of the pH and the ion content of the epithelial fluid layer. Modulates the activity of the epithelial sodium channel (ENaC) complex, in part by regulating the cell surface expression of the ENaC complex. May regulate bicarbonate secretion and salvage in epithelial cells by regulating the transporter SLC4A7. Can inhibit the chloride channel activity of ANO1. Plays a role in the chloride and bicarbonate homeostasis during sperm epididymal maturation and capacitation. The chain is Cystic fibrosis transmembrane conductance regulator from Papio anubis (Olive baboon).